The chain runs to 177 residues: Platelet glycoprotein IX (177 aa).

The signal sequence occupies residues 1-16; it reads MPAWGALFLLWATAEA. Residues 17–51 form the LRRNT domain; sequence TKDCPSPCTCRALETMGLWVDCRGHGLTALPALPA. Over 17–147 the chain is Extracellular; sequence TKDCPSPCTC…QLQASWVRPG (131 aa). An N-linked (GlcNAc...) asparagine glycan is attached at asparagine 60. One copy of the LRR repeat lies at 60–83; it reads NNSLQSVPPGAFDHLPQLQTLDVT. The region spanning 85–137 is the LRRCT domain; sequence NPWHCDCSLTYLRLWLEDRTPEALLQVRCASPSLAAHGPLGRLTGYQLGSCGW. A helical transmembrane segment spans residues 148–168; the sequence is VLWDVALVAVAALGLALLAGL. The Cytoplasmic portion of the chain corresponds to 169-177; the sequence is LCATTEALD.

Two GP-Ib beta are disulfide-linked to one GP-Ib alpha. GP-IX is complexed with the GP-Ib heterodimer via a non covalent linkage.

The protein resides in the membrane. In terms of biological role, the GPIb-V-IX complex functions as the vWF receptor and mediates vWF-dependent platelet adhesion to blood vessels. The adhesion of platelets to injured vascular surfaces in the arterial circulation is a critical initiating event in hemostasis. GP-IX may provide for membrane insertion and orientation of GP-Ib. In Homo sapiens (Human), this protein is Platelet glycoprotein IX (GP9).